A 658-amino-acid polypeptide reads, in one-letter code: Threonine--tRNA ligase (658 aa).

One can recognise a TGS domain in the interval 1 to 64 (MSNTVSLQFP…GASGKLEIIT (64 aa)). Residues 246 to 548 (DHRRLGREMD…LIENFAGHMP (303 aa)) form a catalytic region. Zn(2+)-binding residues include Cys-343, His-394, and His-525.

The protein belongs to the class-II aminoacyl-tRNA synthetase family. Homodimer. Zn(2+) serves as cofactor.

The protein resides in the cytoplasm. It catalyses the reaction tRNA(Thr) + L-threonine + ATP = L-threonyl-tRNA(Thr) + AMP + diphosphate + H(+). Functionally, catalyzes the attachment of threonine to tRNA(Thr) in a two-step reaction: L-threonine is first activated by ATP to form Thr-AMP and then transferred to the acceptor end of tRNA(Thr). Also edits incorrectly charged L-seryl-tRNA(Thr). The sequence is that of Threonine--tRNA ligase from Brucella abortus (strain S19).